Here is a 548-residue protein sequence, read N- to C-terminus: Probable manganese-dependent inorganic pyrophosphatase (548 aa).

The PPase part 1 stretch occupies residues 1 to 74; that stretch reads MKALERVYVI…HIETLEPTVE (74 aa). Mn(2+) is bound by residues His12, Asp16, and Asp18. CBS domains are found at residues 77–132 and 254–311; these read ELKN…RLKI and MSKK…VILV. The PPase part 2 stretch occupies residues 306 to 548; it reads KKVILVDHNE…KIGEVLRRER (243 aa). Positions 312, 334, and 386 each coordinate Mn(2+).

Belongs to the PPase class C family. The cofactor is Mn(2+).

The protein localises to the cytoplasm. The catalysed reaction is diphosphate + H2O = 2 phosphate + H(+). The protein is Probable manganese-dependent inorganic pyrophosphatase (ppaC) of Thermotoga maritima (strain ATCC 43589 / DSM 3109 / JCM 10099 / NBRC 100826 / MSB8).